The chain runs to 930 residues: Translation initiation factor IF-2 (930 aa).

The span at 50-67 (FKPAAAPKVEAKPAAPKV) shows a compositional bias: low complexity. 2 disordered regions span residues 50-217 (FKPA…SSEE) and 260-346 (EVVP…HELP). Composition is skewed to basic and acidic residues over residues 68–90 (SAEK…EAKP) and 110–125 (FKAE…AERR). Low complexity predominate over residues 129–141 (KGNNRDQQQNGNR). Basic and acidic residues-rich tracts occupy residues 157–167 (RDNRRFNDQAK) and 262–295 (VPEK…DGPR). A compositionally biased stretch (low complexity) spans 309 to 318 (NQKNSNWNNN). Positions 337 to 346 (VTERKFHELP) are enriched in basic and acidic residues. One can recognise a tr-type G domain in the interval 432-599 (ERPPVVTIMG…TVLLVAEIQE (168 aa)). The interval 441 to 448 (GHVDHGKT) is G1. 441–448 (GHVDHGKT) serves as a coordination point for GTP. The G2 stretch occupies residues 466-470 (GITQH). The G3 stretch occupies residues 487-490 (DTPG). Residues 487–491 (DTPGH) and 541–544 (NKID) each bind GTP. Residues 541–544 (NKID) form a G4 region. Positions 577–579 (SAK) are G5.

It belongs to the TRAFAC class translation factor GTPase superfamily. Classic translation factor GTPase family. IF-2 subfamily.

It localises to the cytoplasm. One of the essential components for the initiation of protein synthesis. Protects formylmethionyl-tRNA from spontaneous hydrolysis and promotes its binding to the 30S ribosomal subunits. Also involved in the hydrolysis of GTP during the formation of the 70S ribosomal complex. This is Translation initiation factor IF-2 from Streptococcus pneumoniae (strain P1031).